A 235-amino-acid polypeptide reads, in one-letter code: Leucyl/phenylalanyl-tRNA--protein transferase (235 aa).

This sequence belongs to the L/F-transferase family.

It is found in the cytoplasm. The catalysed reaction is N-terminal L-lysyl-[protein] + L-leucyl-tRNA(Leu) = N-terminal L-leucyl-L-lysyl-[protein] + tRNA(Leu) + H(+). It catalyses the reaction N-terminal L-arginyl-[protein] + L-leucyl-tRNA(Leu) = N-terminal L-leucyl-L-arginyl-[protein] + tRNA(Leu) + H(+). It carries out the reaction L-phenylalanyl-tRNA(Phe) + an N-terminal L-alpha-aminoacyl-[protein] = an N-terminal L-phenylalanyl-L-alpha-aminoacyl-[protein] + tRNA(Phe). Functions in the N-end rule pathway of protein degradation where it conjugates Leu, Phe and, less efficiently, Met from aminoacyl-tRNAs to the N-termini of proteins containing an N-terminal arginine or lysine. The sequence is that of Leucyl/phenylalanyl-tRNA--protein transferase from Magnetococcus marinus (strain ATCC BAA-1437 / JCM 17883 / MC-1).